The primary structure comprises 135 residues: Transcription antitermination protein NusB (135 aa).

It belongs to the NusB family.

Involved in transcription antitermination. Required for transcription of ribosomal RNA (rRNA) genes. Binds specifically to the boxA antiterminator sequence of the ribosomal RNA (rrn) operons. In Lacticaseibacillus paracasei (strain ATCC 334 / BCRC 17002 / CCUG 31169 / CIP 107868 / KCTC 3260 / NRRL B-441) (Lactobacillus paracasei), this protein is Transcription antitermination protein NusB.